Reading from the N-terminus, the 86-residue chain is Large ribosomal subunit protein bL27c (86 aa).

Residues 1 to 27 (MAHKKGSGSTRNGRDSNSKRLGVKKYG) are disordered.

This sequence belongs to the bacterial ribosomal protein bL27 family.

It localises to the plastid. The protein resides in the chloroplast. This chain is Large ribosomal subunit protein bL27c, found in Pyropia yezoensis (Susabi-nori).